A 1197-amino-acid polypeptide reads, in one-letter code: Serine/threonine-protein kinase pakA (1197 aa).

Disordered stretches follow at residues 1–96 (MEEK…PIYR), 328–383 (QKED…KNID), 430–468 (REEEEENEDRVERELASRRRQEEDRIKREEEEEEEEQRN), 485–543 (EEEE…NLMG), and 562–819 (NSSG…RVGT). Residues 19–30 (QKFEQFLDKTDK) are compositionally biased toward basic and acidic residues. The segment covering 34-49 (ATRNNYRGPVSSSTGI) has biased composition (polar residues). The segment covering 51-69 (NDKEKKSHSYFKVREEGSN) has biased composition (basic and acidic residues). The segment covering 70–79 (KRPSSFSASN) has biased composition (polar residues). Low complexity-rich tracts occupy residues 80 to 94 (PITPSSPQSTHSSPI) and 346 to 381 (NNNNNENNENDNNNNNNNNNNNNNNNNNNNNNNNKN). Positions 439-458 (RVERELASRRRQEEDRIKRE) are enriched in basic and acidic residues. Low complexity predominate over residues 494–523 (SQLQSSQQQQKSSSTQRSSNTVTSTSSSST). A compositionally biased stretch (polar residues) spans 524–536 (GGDSNPSTSQKPT). Residue T585 is modified to Phosphothreonine; by PKB. Polar residues predominate over residues 593–615 (SENTPLVSSIDNNGVNNKMSRSH). Low complexity-rich tracts occupy residues 636 to 653 (NVNNSNNNNNNNNINNNH) and 671 to 707 (SSSMSTPSISPSQAGNSATSTVPSSPISASTSMSSPT). The span at 718-727 (TTSTGSTRKG) shows a compositional bias: polar residues. Residues 728–737 (SISEREDKKK) show a composition bias toward basic and acidic residues. The segment covering 739-756 (SSSSTSSSSSSNGGLSSS) has biased composition (low complexity). The segment covering 757 to 790 (GKDHKKDHSSEEKEKEKKSFFNKLFSKEKKDHHS) has biased composition (basic and acidic residues). In terms of domain architecture, CRIB spans 817–830 (VGTPFNVKHDVHVN). The Protein kinase domain maps to 911–1164 (YYNINKIGEG…SSSLLHHPFL (254 aa)). ATP is bound by residues 917–925 (IGEGGAGEV) and K940. D1032 functions as the Proton acceptor in the catalytic mechanism.

It belongs to the protein kinase superfamily. STE Ser/Thr protein kinase family. STE20 subfamily. The cofactor is Mg(2+). Phosphorylation on Thr-585 results in cAMP-mediated activation and localization to the cytoskeleton. As to expression, colocalizes with myosin II to the cleavage furrow of cells undergoing cytokinesis and the posterior cortex of polarized cells.

Its subcellular location is the cytoplasm. It is found in the cytosol. It localises to the cytoskeleton. It carries out the reaction L-seryl-[protein] + ATP = O-phospho-L-seryl-[protein] + ADP + H(+). The enzyme catalyses L-threonyl-[protein] + ATP = O-phospho-L-threonyl-[protein] + ADP + H(+). Its function is as follows. Regulator of the myosin II component of the cytoskeleton: required for regulation of cytokinesis. Functions during chemotaxis, required for maintaining the direction of cell movement, suppressing lateral pseudopod extension, and proper retraction of the posterior of chemotaxing cells. The sequence is that of Serine/threonine-protein kinase pakA (pakA) from Dictyostelium discoideum (Social amoeba).